Reading from the N-terminus, the 194-residue chain is Holliday junction branch migration complex subunit RuvA (194 aa).

The domain I stretch occupies residues 1–64 (MIGRLRGILA…EDSVSLYGFL (64 aa)). The interval 65–140 (REGERRLFRD…RAADFSSGAP (76 aa)) is domain II. Residues 140–144 (PITGQ) form a flexible linker region. Positions 145 to 194 (LGPDAVSEATVALQQLGYKPAEAARMARDAGAEGDEVATVIRKALQAALR) are domain III.

Belongs to the RuvA family. In terms of assembly, homotetramer. Forms an RuvA(8)-RuvB(12)-Holliday junction (HJ) complex. HJ DNA is sandwiched between 2 RuvA tetramers; dsDNA enters through RuvA and exits via RuvB. An RuvB hexamer assembles on each DNA strand where it exits the tetramer. Each RuvB hexamer is contacted by two RuvA subunits (via domain III) on 2 adjacent RuvB subunits; this complex drives branch migration. In the full resolvosome a probable DNA-RuvA(4)-RuvB(12)-RuvC(2) complex forms which resolves the HJ.

Its subcellular location is the cytoplasm. Its function is as follows. The RuvA-RuvB-RuvC complex processes Holliday junction (HJ) DNA during genetic recombination and DNA repair, while the RuvA-RuvB complex plays an important role in the rescue of blocked DNA replication forks via replication fork reversal (RFR). RuvA specifically binds to HJ cruciform DNA, conferring on it an open structure. The RuvB hexamer acts as an ATP-dependent pump, pulling dsDNA into and through the RuvAB complex. HJ branch migration allows RuvC to scan DNA until it finds its consensus sequence, where it cleaves and resolves the cruciform DNA. This chain is Holliday junction branch migration complex subunit RuvA, found in Xanthomonas axonopodis pv. citri (strain 306).